A 216-amino-acid polypeptide reads, in one-letter code: MTKKYSLGFVGRKAGMSRVFTEDGRSIPVTLIEATPNRIAQIKTVETDGYSAVQVTVGARRAALVNKPEAGHFAKAKVEAGRGLWEFRVEDAQLGDFAVGGEVKADIFEVGQIVDVQGVTKGKGFQGTIKRHNFRMGDATHGNSLSHRAPGSLGQRQTPGRVFPGKKMSGHMGAVQQSTQNLEVVKVDVERGLIAVRGAVPGAAGGDVIVRPASKA.

Gln157 bears the N5-methylglutamine mark.

It belongs to the universal ribosomal protein uL3 family. As to quaternary structure, part of the 50S ribosomal subunit. Forms a cluster with proteins L14 and L19. Post-translationally, methylated by PrmB.

One of the primary rRNA binding proteins, it binds directly near the 3'-end of the 23S rRNA, where it nucleates assembly of the 50S subunit. The chain is Large ribosomal subunit protein uL3 from Stenotrophomonas maltophilia (strain R551-3).